Consider the following 274-residue polypeptide: Large ribosomal subunit protein uL2cz/uL2cy (274 aa).

Disordered stretches follow at residues 1-23 (MAIH…SQVK) and 223-274 (MNPV…RRSK). Over residues 7 to 23 (KTSTPSTRNGTVGSQVK) the composition is skewed to polar residues.

It belongs to the universal ribosomal protein uL2 family. Part of the 50S ribosomal subunit.

Its subcellular location is the plastid. It is found in the chloroplast. The chain is Large ribosomal subunit protein uL2cz/uL2cy (rpl2-A) from Nandina domestica (Heavenly bamboo).